The chain runs to 938 residues: Respiratory burst oxidase homolog protein C (938 aa).

The tract at residues 1-63 is disordered; sequence MQNSENHHPH…DIGTSAGAGA (63 aa). Over 1 to 369 the chain is Cytoplasmic; it reads MQNSENHHPH…MYFLLDNWQR (369 aa). The stretch at 115–141 forms a coiled coil; the sequence is ASLVRNASSRIRQVSQELKRLASLNKR. EF-hand-like stretches follow at residues 185–195 and 222–233; these read TAPTTGLLPRA and RNITTDSINKAQ. EF-hand domains lie at 245-280 and 289-324; these read SFDT…SASA and QSDE…APNQ. 5 residues coordinate Ca(2+): aspartate 258, aspartate 260, aspartate 262, arginine 264, and glutamate 269. A helical transmembrane segment spans residues 370 to 390; it reads VWVLLLWIGIMAVLFTWKYIQ. Residues 391–402 are Extracellular-facing; the sequence is YKQKAAYDVMGP. A helical transmembrane segment spans residues 403-423; sequence CVCLAKGAAETIKLNMAIILL. The region spanning 408–565 is the Ferric oxidoreductase domain; that stretch reads KGAAETIKLN…LFIIVYTLLI (158 aa). The Cytoplasmic portion of the chain corresponds to 424–454; that stretch reads PVCRNTITWLRNKTRLGSAVPFDDNLNFHKV. A helical membrane pass occupies residues 455–475; sequence IAVAIALGVAIHGLAHLTCDF. The Extracellular portion of the chain corresponds to 476 to 509; sequence PKLLNASEEAYEPMIYYFGEQPESYWWFVRGVEG. A helical membrane pass occupies residues 510–530; the sequence is VTGIIMVVLMAIAFTLATPWF. Residues 531–545 are Cytoplasmic-facing; that stretch reads RRGRVSFPKPFHKLT. A helical membrane pass occupies residues 546 to 566; sequence GFNAFWYSHHLFIIVYTLLIV. At 567–580 the chain is on the extracellular side; sequence HGEKLYITKDWYKR. Residues 581–599 form a helical membrane-spanning segment; it reads STWMYLTVPLVLYAGERLL. An FAD-binding FR-type domain is found at 599–727; it reads LRAFRSSIKA…DGPYGAPAQD (129 aa). At 600–732 the chain is on the cytoplasmic side; sequence RAFRSSIKAV…APAQDYKQYE (133 aa). The helical transmembrane segment at 733–753 threads the bilayer; sequence VVLLVGLGIGATPMISIVKDI. The Extracellular segment spans residues 754-938; sequence VNNMKAMDEE…TKFDFHKENF (185 aa). A disordered region spans residues 762 to 796; it reads EEENSLENGNGMSNAAQNASPNMAQKRGKSSSASG. The segment covering 767 to 784 has biased composition (polar residues); that stretch reads LENGNGMSNAAQNASPNM.

It belongs to the RBOH (TC 5.B.1.3) family. In terms of assembly, monomer and homodimer. In terms of processing, phosphorylated by CPK. As to expression, expressed in leaves.

It localises to the membrane. In terms of biological role, calcium-dependent NADPH oxidase that generates superoxide. May be responsible for the oxidative burst in response to pathogen attack in the leaves. The protein is Respiratory burst oxidase homolog protein C (RBOHC) of Solanum tuberosum (Potato).